The sequence spans 226 residues: MSDETNAAVWDDSLLVKTYDESVGLAREALARRLADSTNKREEENAAAAEEEAGEISATGGATSPEPVSFKVGDYARATYVDGVDYEGAVVSINEEKGTCVLRYLGYENEQEVLLVDLLPSWGKRVRREQFLIAKKDEDEQLSRPKASAGSHSKTPKSSRRSRISGGLVMPPMPPVPPMIVGQGDGAEQDFVAMLTAWYMSGYYTGLYQGKKEASTTSGKKKTPKK.

The segment covering 35–44 has biased composition (basic and acidic residues); the sequence is ADSTNKREEE. The tract at residues 35–68 is disordered; the sequence is ADSTNKREEENAAAAEEEAGEISATGGATSPEPV. The region spanning 69–128 is the Tudor domain; sequence SFKVGDYARATYVDGVDYEGAVVSINEEKGTCVLRYLGYENEQEVLLVDLLPSWGKRVRR. The segment at 137–172 is disordered; sequence DEDEQLSRPKASAGSHSKTPKSSRRSRISGGLVMPP. The span at 154 to 163 shows a compositional bias: basic residues; the sequence is KTPKSSRRSR. The tract at residues 159–226 is required for homodimerization; that stretch reads SRRSRISGGL…TSGKKKTPKK (68 aa).

The protein belongs to the SMN family. As to quaternary structure, homodimer (via C-terminal region). Component of the core survival motor neuron (SMN) complex composed of Smn, Gem2, Gem3, rig/Gem5 and one of 3 almost identical Gem4 paralogs encoded by Glos/Gem4a, Gem4b or Gem4c. Interacts with Gem3 (via C-terminus); the interaction is direct and stabilizes Smn. Part of a minimal SMN complex composed of Smn and Gem2 only; this complex is active in UsnRNP assembly. The SMN complex associates with the entire set of spliceosomal snRNP Sm proteins, SmB, SmD1, SmD2, SmD3, SmE, SmF and SmG, and with the snRNP-specific proteins snRNP-U1-70K, U2A, snf/U1A and U5-116KD. Interacts with Glos/Gem4a; the interaction is probably indirect. Interacts with Sbat and Vlet; Sbat and Vlet, along with Hez, may form an accessory subcomplex involved in SMN complex function. Interacts weakly with Gem3. Interacts with SmB and SmD1; the interaction is favored by methylation of the Sm proteins. Interacts with Actn; the interaction occurs in thoracic tissues and in adult flies. Interacts with Rpp20. Interacts with msk and Snup; these interactions are RNA-dependent. As to expression, in late first instar larvae, expressed in pNBs. Expression increases as the pNBs enlarge, with the highest accumulation observed in dividing pNBs of second and third instar larvae. Enriched in type ID (thoracic and brain lobe), type IA and all the mira-expressing NBs of the brain lobes. In larvae, also expressed in muscle fibers. In larval and adult testis, expressed in germline stem cells and gonialblast, expression decreases as cells differentiate into cysts and spermatocytes. In adult fly thorax, expressed in the IFMs. In adult ovary, expressed in germline stem cells, cystoblasts, follicle cells, nurse cells and oocyte (at protein level). Also expressed in larval salivary glands.

The protein localises to the cytoplasm. It localises to the nucleus. It is found in the U-body. The protein resides in the gem. Its subcellular location is the cajal body. The protein localises to the myofibril. It localises to the sarcomere. It is found in the i band. The protein resides in the z line. Functionally, core component of the survival motor neuron (SMN) complex that plays an essential role in spliceosomal small nuclear ribonucleoprotein (snRNP) assembly in the cytoplasm, is required for pre-mRNA splicing in the nucleus and acts as a chaperone that discriminates target and non-target RNAs of Sm proteins. A major component of nuclear bodies known as gems (gemini of Cajal bodies) thought to be storage depots of excess SMN complexes. Required for normal expression of spliceosomal snRNAs and for U12 intron splicing. Required in cholinergic neurons, but not in motor neurons, to ensure correct splicing and proper levels of stas mRNA and normal neurotransmitter release by motor neurons. However, Smn is required in motor neurons, but not in cholinergic neurons, for normal motor behavior but plays no role in synaptic transmission according to a report. In both muscle and neurons, required for the formation of a normal neuromuscular junction (NMJ) structure. Plays a neuron-specific role in long-term homeostatic compensation at the larval NMJ. In the thorax of adult flies, required for Act88F, an indirect flight muscle (IFM)-specific actin, expression and for proper IFM myofibril formation. In nurse cells, oocytes and follicle cells, required to maintain normal organization of nuclear compartments including chromosomes, nucleoli, Cajal bodies, histone locus bodies and heterochromatin. Required for the functional integrity of the cytoplasmic U snRNP body (U body) and P body. Required in dividing postembryonic neuroblasts (pNBs) for the correct basal localization of mira. The tight regulation of its expression is critical for stem cell division, proliferation and differentiation in male germline and developing central nervous system (CNS). Required for tracheal terminal cell lumen formation. The polypeptide is Survival motor neuron protein (Drosophila melanogaster (Fruit fly)).